We begin with the raw amino-acid sequence, 110 residues long: Tyrosine-protein phosphatase 3 (110 aa).

One can recognise a Tyrosine-protein phosphatase domain in the interval 1-110 (QKCATIVMVT…NPPHSGPIVV (110 aa)). D80 contacts substrate.

Belongs to the protein-tyrosine phosphatase family.

The enzyme catalyses O-phospho-L-tyrosyl-[protein] + H2O = L-tyrosyl-[protein] + phosphate. The sequence is that of Tyrosine-protein phosphatase 3 (STY-3) from Styela plicata (Wrinkled sea squirt).